We begin with the raw amino-acid sequence, 488 residues long: GTPase Der (488 aa).

EngA-type G domains lie at 3-166 (PVIA…PRDP) and 193-366 (IKIA…MSAV). GTP is bound by residues 9–16 (GRPNVGKS), 56–60 (DTGGI), 118–121 (NKID), 199–206 (GRPNVGKS), 246–250 (DTAGV), and 311–314 (NKWD). In terms of domain architecture, KH-like spans 367 to 451 (TRWPTSRLTQ…PIRIEYKGGD (85 aa)). Basic and acidic residues predominate over residues 449–461 (GGDNPFEGKKNTL). Residues 449-488 (GGDNPFEGKKNTLTDRQVNKKRRLMSHHKKAEKKRRDKRK) form a disordered region. Basic residues predominate over residues 467–488 (NKKRRLMSHHKKAEKKRRDKRK).

Belongs to the TRAFAC class TrmE-Era-EngA-EngB-Septin-like GTPase superfamily. EngA (Der) GTPase family. Associates with the 50S ribosomal subunit.

Its function is as follows. GTPase that plays an essential role in the late steps of ribosome biogenesis. In Pseudomonas entomophila (strain L48), this protein is GTPase Der.